A 102-amino-acid chain; its full sequence is NADH-quinone oxidoreductase subunit K (102 aa).

The next 3 membrane-spanning stretches (helical) occupy residues 6–26, 31–51, and 62–82; these read ATHFLLLSAALFIIGMVGVLT, LVIFMCIELMLNAVNVSLIGF, and VFALFVIAIAAAEAVVGLGIV.

The protein belongs to the complex I subunit 4L family. As to quaternary structure, NDH-1 is composed of 14 different subunits. Subunits NuoA, H, J, K, L, M, N constitute the membrane sector of the complex.

Its subcellular location is the cell membrane. It catalyses the reaction a quinone + NADH + 5 H(+)(in) = a quinol + NAD(+) + 4 H(+)(out). Functionally, NDH-1 shuttles electrons from NADH, via FMN and iron-sulfur (Fe-S) centers, to quinones in the respiratory chain. The immediate electron acceptor for the enzyme in this species is believed to be ubiquinone. Couples the redox reaction to proton translocation (for every two electrons transferred, four hydrogen ions are translocated across the cytoplasmic membrane), and thus conserves the redox energy in a proton gradient. This is NADH-quinone oxidoreductase subunit K from Thermomicrobium roseum (strain ATCC 27502 / DSM 5159 / P-2).